Here is a 458-residue protein sequence, read N- to C-terminus: GTPase Der (458 aa).

2 EngA-type G domains span residues 4–169 (PSIA…PKDL) and 178–353 (IMMS…TQHR). GTP is bound by residues 10 to 17 (GRPNVGKS), 57 to 61 (DTGGL), 120 to 123 (NKCE), 184 to 191 (GRPNVGKS), 231 to 235 (DTAGI), and 296 to 299 (NKWD). The KH-like domain maps to 354–439 (RRVTTSVVNE…PIILLWRGKQ (86 aa)).

This sequence belongs to the TRAFAC class TrmE-Era-EngA-EngB-Septin-like GTPase superfamily. EngA (Der) GTPase family. In terms of assembly, associates with the 50S ribosomal subunit.

Its function is as follows. GTPase that plays an essential role in the late steps of ribosome biogenesis. This chain is GTPase Der, found in Prochlorococcus marinus subsp. pastoris (strain CCMP1986 / NIES-2087 / MED4).